A 141-amino-acid polypeptide reads, in one-letter code: Large ribosomal subunit protein uL16 (141 aa).

Positions 1 to 20 (MLMPKRTKYRKQQKGRNRGK) are disordered.

It belongs to the universal ribosomal protein uL16 family. Part of the 50S ribosomal subunit.

In terms of biological role, binds 23S rRNA and is also seen to make contacts with the A and possibly P site tRNAs. This is Large ribosomal subunit protein uL16 from Nautilia profundicola (strain ATCC BAA-1463 / DSM 18972 / AmH).